We begin with the raw amino-acid sequence, 378 residues long: GDP-mannose 3,5-epimerase 1 (378 aa).

Residues 36–62 (GAGG…SDWK), Asp60, and Asp80 each bind NAD(+). Residues Gly105 and 145–147 (SAC) each bind substrate. NAD(+)-binding residues include Tyr175 and Lys179. Tyr175 (proton acceptor) is an active-site residue. Residues Asn204, 217–219 (EKA), Lys226, 242–244 (QTR), Arg307, and Ser357 contribute to the substrate site.

It belongs to the NAD(P)-dependent epimerase/dehydratase family. In terms of assembly, homodimer. Requires NAD(+) as cofactor.

The enzyme catalyses GDP-alpha-D-mannose = GDP-beta-L-gulose. It catalyses the reaction GDP-beta-L-gulose = GDP-beta-L-galactose. It participates in cofactor biosynthesis; L-ascorbate biosynthesis via GDP-alpha-D-mannose pathway; L-ascorbate from GDP-alpha-D-mannose: step 1/5. Functionally, catalyzes a reversible epimerization of GDP-D-mannose that precedes the committed step in the biosynthesis of vitamin C (L-ascorbate), resulting in the hydrolysis of the highly energetic glycosyl-pyrophosphoryl linkage. Able to catalyze 2 distinct epimerization reactions and can release both GDP-L-galactose and GDP-L-gulose from GDP-mannose. This is GDP-mannose 3,5-epimerase 1 from Oryza sativa subsp. indica (Rice).